The following is a 392-amino-acid chain: 8-amino-7-oxononanoate synthase (392 aa).

Arginine 26 is a binding site for substrate. 113–114 contacts pyridoxal 5'-phosphate; that stretch reads GY. Histidine 138 lines the substrate pocket. Residues serine 186, histidine 214, and threonine 241 each coordinate pyridoxal 5'-phosphate. Lysine 244 carries the N6-(pyridoxal phosphate)lysine modification. Threonine 353 contributes to the substrate binding site.

This sequence belongs to the class-II pyridoxal-phosphate-dependent aminotransferase family. BioF subfamily. In terms of assembly, homodimer. Pyridoxal 5'-phosphate is required as a cofactor.

The enzyme catalyses 6-carboxyhexanoyl-[ACP] + L-alanine + H(+) = (8S)-8-amino-7-oxononanoate + holo-[ACP] + CO2. Its pathway is cofactor biosynthesis; biotin biosynthesis. In terms of biological role, catalyzes the decarboxylative condensation of pimeloyl-[acyl-carrier protein] and L-alanine to produce 8-amino-7-oxononanoate (AON), [acyl-carrier protein], and carbon dioxide. The chain is 8-amino-7-oxononanoate synthase from Maricaulis maris (strain MCS10) (Caulobacter maris).